The primary structure comprises 365 residues: MSEDMEFENWGSTQSSVEKFCYKWTISNFSFCMGGIQRRITSPVFSSEENKEVAWCLRVYPKGADKESKDYLSVYLVLLSHLQIPVWAKFKFWIINSQGEKYQKIKSPTVECFLTNEQNGFKKFLPRDLLLSHRNCLLPEDQLTICCKVTILGRKYNMPSQNITPAIKDPRHLLTDDLGELWENSLFTDCCLLVAGHEFRAHKAILAARSPVFRAMFEHEMKESLKTPIKIHNLNPQVFKEMMGFIYTGKAPHLHSHSMACDVLPAADKYGLVSLKVLCEDALCRNLSVKNATHTLILADLHSTEKLKTQALDFIAYYASEVCETSEWKSILESHPHLVAEAFQSLASAQCSFLEPKVISGSNQL.

Residues 19-149 (KFCYKWTISN…EDQLTICCKV (131 aa)) form the MATH domain. The 63-residue stretch at 188-250 (TDCCLLVAGH…EMMGFIYTGK (63 aa)) folds into the BTB domain.

The protein belongs to the Tdpoz family.

The protein is TD and POZ domain-containing protein 1 of Mus musculus (Mouse).